The chain runs to 403 residues: Vacuole membrane protein 1 homolog (403 aa).

Residues 7–33 (IVLSNEKDIQLRIQQLEERKEKRKNVK) adopt a coiled-coil conformation. The next 8 helical transmembrane spans lie at 65 to 85 (FLLFFIALFASLTFIAVYVPG), 102 to 122 (IWWVGLGVLSSIGLGTGLHTF), 150 to 170 (ANSFIQPATAMIGGVSFWMIL), 175 to 195 (WAALFWGAGTAIGELPPYFVA), 240 to 260 (LIGNLGFFGILAFASIPNPLF), 263 to 283 (AGITCGHFLVPFWKFFGATFI), 294 to 314 (ACFVILAFNMETLTMVISFIE), and 348 to 368 (VGLAWDCVLFLMISYFLMSIV).

It belongs to the VMP1 family.

The protein resides in the membrane. It is found in the endoplasmic reticulum. It catalyses the reaction a 1,2-diacyl-sn-glycero-3-phospho-L-serine(in) = a 1,2-diacyl-sn-glycero-3-phospho-L-serine(out). The catalysed reaction is cholesterol(in) = cholesterol(out). The enzyme catalyses a 1,2-diacyl-sn-glycero-3-phosphocholine(in) = a 1,2-diacyl-sn-glycero-3-phosphocholine(out). It carries out the reaction a 1,2-diacyl-sn-glycero-3-phosphoethanolamine(in) = a 1,2-diacyl-sn-glycero-3-phosphoethanolamine(out). Its function is as follows. Phospholipid scramblase involved in lipid homeostasis and membrane dynamics processes. Required for autophagosome formation: participates in early stages of autophagosome biogenesis at the endoplasmic reticulum (ER) membrane by reequilibrating the leaflets of the ER as lipids are extracted. In addition to autophagy, involved in other processes in which phospholipid scramblase activity is required. This is Vacuole membrane protein 1 homolog from Dictyostelium discoideum (Social amoeba).